Here is a 66-residue protein sequence, read N- to C-terminus: UPF0370 protein YpfN (66 aa).

The chain crosses the membrane as a helical span at residues 4-24 (LAKYWWILVLVFLVGVLLNVI). Positions 39–66 (KPELPPHRDFNDKWDDEEDWPKKDQPKK) are disordered. Positions 42-51 (LPPHRDFNDK) are enriched in basic and acidic residues.

The protein belongs to the UPF0370 family.

It localises to the cell membrane. This Salmonella paratyphi A (strain AKU_12601) protein is UPF0370 protein YpfN.